A 396-amino-acid polypeptide reads, in one-letter code: Phosphopentomutase (396 aa).

Mn(2+) is bound by residues Asp14, Asp286, His291, Asp327, His328, and His339.

It belongs to the phosphopentomutase family. The cofactor is Mn(2+).

It localises to the cytoplasm. It carries out the reaction 2-deoxy-alpha-D-ribose 1-phosphate = 2-deoxy-D-ribose 5-phosphate. The catalysed reaction is alpha-D-ribose 1-phosphate = D-ribose 5-phosphate. Its pathway is carbohydrate degradation; 2-deoxy-D-ribose 1-phosphate degradation; D-glyceraldehyde 3-phosphate and acetaldehyde from 2-deoxy-alpha-D-ribose 1-phosphate: step 1/2. In terms of biological role, isomerase that catalyzes the conversion of deoxy-ribose 1-phosphate (dRib-1-P) and ribose 1-phosphate (Rib-1-P) to deoxy-ribose 5-phosphate (dRib-5-P) and ribose 5-phosphate (Rib-5-P), respectively. In Staphylococcus epidermidis (strain ATCC 35984 / DSM 28319 / BCRC 17069 / CCUG 31568 / BM 3577 / RP62A), this protein is Phosphopentomutase.